Consider the following 464-residue polypeptide: Siroheme synthase (464 aa).

Residues 1–203 (MDYLPLFHKL…GQGAEAERLL (203 aa)) form a precorrin-2 dehydrogenase /sirohydrochlorin ferrochelatase region. Residues 22–23 (EI) and 43–44 (PE) each bind NAD(+). Position 128 is a phosphoserine (Ser-128). The tract at residues 216–464 (GEVYLVGAGP…AWFEGSQQDQ (249 aa)) is uroporphyrinogen-III C-methyltransferase. Residue Pro-225 participates in S-adenosyl-L-methionine binding. Residue Asp-248 is the Proton acceptor of the active site. Lys-270 (proton donor) is an active-site residue. Residues 301–303 (GGD), Ile-306, 331–332 (TA), Met-383, and Gly-412 contribute to the S-adenosyl-L-methionine site.

It in the N-terminal section; belongs to the precorrin-2 dehydrogenase / sirohydrochlorin ferrochelatase family. This sequence in the C-terminal section; belongs to the precorrin methyltransferase family.

The enzyme catalyses uroporphyrinogen III + 2 S-adenosyl-L-methionine = precorrin-2 + 2 S-adenosyl-L-homocysteine + H(+). The catalysed reaction is precorrin-2 + NAD(+) = sirohydrochlorin + NADH + 2 H(+). It catalyses the reaction siroheme + 2 H(+) = sirohydrochlorin + Fe(2+). It participates in cofactor biosynthesis; adenosylcobalamin biosynthesis; precorrin-2 from uroporphyrinogen III: step 1/1. Its pathway is cofactor biosynthesis; adenosylcobalamin biosynthesis; sirohydrochlorin from precorrin-2: step 1/1. It functions in the pathway porphyrin-containing compound metabolism; siroheme biosynthesis; precorrin-2 from uroporphyrinogen III: step 1/1. The protein operates within porphyrin-containing compound metabolism; siroheme biosynthesis; siroheme from sirohydrochlorin: step 1/1. It participates in porphyrin-containing compound metabolism; siroheme biosynthesis; sirohydrochlorin from precorrin-2: step 1/1. Functionally, multifunctional enzyme that catalyzes the SAM-dependent methylations of uroporphyrinogen III at position C-2 and C-7 to form precorrin-2 via precorrin-1. Then it catalyzes the NAD-dependent ring dehydrogenation of precorrin-2 to yield sirohydrochlorin. Finally, it catalyzes the ferrochelation of sirohydrochlorin to yield siroheme. This is Siroheme synthase from Pseudomonas putida (strain W619).